Consider the following 309-residue polypeptide: Fructosamine-3-kinase (309 aa).

Methionine 1 carries the N-acetylmethionine modification. 89 to 91 lines the ATP pocket; the sequence is EHL. Aspartate 217 acts as the Proton acceptor in catalysis.

This sequence belongs to the fructosamine kinase family. In terms of assembly, monomer. As to expression, widely expressed. Expressed in erythrocytes.

The catalysed reaction is N(6)-(D-fructosyl)-L-lysyl-[protein] + ATP = N(6)-(3-O-phospho-D-fructosyl)-L-lysyl-[protein] + ADP + H(+). The enzyme catalyses N(6)-D-ribulosyl-L-lysyl-[protein] + ATP = N(6)-(3-O-phospho-D-ribulosyl)-L-lysyl-[protein] + ADP + H(+). It carries out the reaction N(6)-(D-psicosyl)-L-lysyl-[protein] + ATP = N(6)-(3-O-phospho-D-psicosyl)-L-lysyl-[protein] + ADP + H(+). In terms of biological role, fructosamine-3-kinase involved in protein deglycation by mediating phosphorylation of fructoselysine residues on glycated proteins, to generate fructoselysine-3 phosphate. Fructoselysine-3 phosphate adducts are unstable and decompose under physiological conditions. Involved in intracellular deglycation in erythrocytes. Involved in the response to oxidative stress by mediating deglycation of NFE2L2/NRF2, glycation impairing NFE2L2/NRF2 function. Also able to phosphorylate psicosamines and ribulosamines. In Homo sapiens (Human), this protein is Fructosamine-3-kinase.